Consider the following 502-residue polypeptide: Premnaspirodiene oxygenase (502 aa).

A helical membrane pass occupies residues 2–22; it reads QFFSLVSIFLFLSFLFLLRKW. Cys440 is a binding site for heme.

The protein belongs to the cytochrome P450 family. Requires heme as cofactor.

Its subcellular location is the membrane. The catalysed reaction is (-)-vetispiradiene + 2 reduced [NADPH--hemoprotein reductase] + 2 O2 = solavetivone + 2 oxidized [NADPH--hemoprotein reductase] + 3 H2O + 2 H(+). Functionally, involved in the biosynthesis of solavetivone, a potent antifungal phytoalexin. Catalyzes the successive and independent hydroxylations of premnaspirodiene and solavetivol. The first hydroxylation step is 3-fold more efficient than the second hydroxylation reaction. This chain is Premnaspirodiene oxygenase (CYP71D55), found in Hyoscyamus muticus (Egyptian henbane).